Reading from the N-terminus, the 31-residue chain is Alcohol dehydrogenase 1 (31 aa).

Cys7 provides a ligand contact to Zn(2+).

This sequence belongs to the zinc-containing alcohol dehydrogenase family. Class-P subfamily. Homodimer. Requires Zn(2+) as cofactor.

It localises to the cytoplasm. It carries out the reaction a primary alcohol + NAD(+) = an aldehyde + NADH + H(+). It catalyses the reaction a secondary alcohol + NAD(+) = a ketone + NADH + H(+). This Catharanthus roseus (Madagascar periwinkle) protein is Alcohol dehydrogenase 1.